Reading from the N-terminus, the 488-residue chain is Prostaglandin E2 receptor EP4 subtype (488 aa).

Residues 1–19 (MSTPVANASASSMPELLNN) lie on the Extracellular side of the membrane. N7 carries N-linked (GlcNAc...) asparagine glycosylation. A helical transmembrane segment spans residues 20–43 (PVTIPAVMFIFGVVGNLVAIVVLC). Over 44–55 (KSRKEQKETTFY) the chain is Cytoplasmic. The chain crosses the membrane as a helical span at residues 56 to 79 (TLVCGLAVTDLLGTLLVSPVTIAT). Over 80 to 96 (YMKGQWPGGQALCDYST) the chain is Extracellular. Cysteines 92 and 170 form a disulfide. Residues 97-115 (FILLFFGLSGLSIICAMSI) traverse the membrane as a helical segment. Topologically, residues 116–135 (ERYLAINHAYFYSHYVDKRL) are cytoplasmic. A helical membrane pass occupies residues 136-160 (AGLTLFAVYASNVLFCALPNMGLGR). Topologically, residues 161–184 (SRLQFPDTWCFIDWRTNVTAHAAF) are extracellular. N-linked (GlcNAc...) asparagine glycosylation occurs at N177. The helical transmembrane segment at 185-211 (SYMYAGFSSFLILATVLCNVLVCGALL) threads the bilayer. At 212–270 (RMHRQFMRRTSLGTEQHHAAAAAAVTSAACRGHPTASPALPRLSDFRRRRSFRRIAGAE) the chain is on the cytoplasmic side. The chain crosses the membrane as a helical span at residues 271 to 298 (IQMVILLIATSLVVLICSIPLVVRVFIN). At 299-315 (QLYQPDLVREISQNPDL) the chain is on the extracellular side. A helical transmembrane segment spans residues 316 to 335 (QAIRIASVNPILDPWIYILL). Residues 336–488 (RKTVLSKAIE…ETLNLSEKCI (153 aa)) are Cytoplasmic-facing. Basic and acidic residues predominate over residues 358–371 (RRDRSGQHCSDSRR). Residues 358-381 (RRDRSGQHCSDSRRTSSAMSTHSR) are disordered. Residues 372–381 (TSSAMSTHSR) show a composition bias toward polar residues. Phosphoserine occurs at positions 377, 380, 382, and 385. A disordered region spans residues 456–475 (EVGGGGRAGPTPKGSSLQVT).

It belongs to the G-protein coupled receptor 1 family. As to quaternary structure, interacts with FEM1A. Post-translationally, phosphorylation mediates agonist-mediated desensitization by promoting cytoplasmic retention. As to expression, highly expressed in intestine, duodenal epithelium, uterus, thymus and adrenal cortex. Lower but significant expression in whole adrenal, lung, spleen, stomach, and kidney. In this latter organ, the receptor is localized in the glomeruli and the transitional epithelium of the renal calyx.

The protein resides in the cell membrane. Its function is as follows. Receptor for prostaglandin E2 (PGE2). The activity of this receptor is mediated by G(s) proteins that stimulate adenylate cyclase. Has a relaxing effect on smooth muscle. May play an important role in regulating renal hemodynamics, intestinal epithelial transport, adrenal aldosterone secretion, and uterine function. The sequence is that of Prostaglandin E2 receptor EP4 subtype (PTGER4) from Oryctolagus cuniculus (Rabbit).